The chain runs to 453 residues: Lipase 9 (453 aa).

Residues 1–14 (MLYLILFLIAPIYA) form the signal peptide. The N-linked (GlcNAc...) asparagine glycan is linked to N36. An intrachain disulfide couples C110 to C281. The Charge relay system role is filled by S194. N-linked (GlcNAc...) asparagine glycosylation is found at N229, N266, and N269. Active-site charge relay system residues include D343 and H376. Residues C359 and C404 are joined by a disulfide bond. N417 carries N-linked (GlcNAc...) asparagine glycosylation.

Belongs to the AB hydrolase superfamily. Lipase family. Class Lip subfamily.

It is found in the secreted. The enzyme catalyses a triacylglycerol + H2O = a diacylglycerol + a fatty acid + H(+). Its function is as follows. Secreted lipase that is able to hydrolyze both the neutral triacylglycerols and the monopalmitate ester Tween 40, allowing the use of hydrolyzed products as carbon sources. Has broad lipolytic activity, which may be important for colonization and subsequent infection, therefore contributing to the persistence and virulence in human tissue. The polypeptide is Lipase 9 (Candida albicans (strain SC5314 / ATCC MYA-2876) (Yeast)).